A 499-amino-acid chain; its full sequence is Glycerol kinase (499 aa).

Threonine 12 serves as a coordination point for ADP. 3 residues coordinate ATP: threonine 12, threonine 13, and serine 14. Threonine 12 is a sn-glycerol 3-phosphate binding site. Residue arginine 16 coordinates ADP. Sn-glycerol 3-phosphate contacts are provided by arginine 82, glutamate 83, and tyrosine 134. Positions 82, 83, and 134 each coordinate glycerol. A Phosphohistidine; by HPr modification is found at histidine 230. Aspartate 244 provides a ligand contact to sn-glycerol 3-phosphate. Aspartate 244 and glutamine 245 together coordinate glycerol. ADP contacts are provided by threonine 266 and glycine 309. ATP is bound by residues threonine 266, glycine 309, glutamine 313, and glycine 410. Residues glycine 410 and asparagine 414 each contribute to the ADP site.

Belongs to the FGGY kinase family. Homotetramer and homodimer (in equilibrium). In terms of processing, the phosphoenolpyruvate-dependent sugar phosphotransferase system (PTS), including enzyme I, and histidine-containing protein (HPr) are required for the phosphorylation, which leads to the activation of the enzyme.

The enzyme catalyses glycerol + ATP = sn-glycerol 3-phosphate + ADP + H(+). The protein operates within polyol metabolism; glycerol degradation via glycerol kinase pathway; sn-glycerol 3-phosphate from glycerol: step 1/1. With respect to regulation, activated by phosphorylation and inhibited by fructose 1,6-bisphosphate (FBP). Key enzyme in the regulation of glycerol uptake and metabolism. Catalyzes the phosphorylation of glycerol to yield sn-glycerol 3-phosphate. The protein is Glycerol kinase of Staphylococcus haemolyticus (strain JCSC1435).